A 259-amino-acid polypeptide reads, in one-letter code: Global transcriptional regulator CodY (259 aa).

The interval 1 to 155 (MELLAKTRKL…SSTVVGMEIL (155 aa)) is GAF domain. The segment at residues 203 to 222 (ASKIADRVGITRSVIVNALR) is a DNA-binding region (H-T-H motif). A Phosphoserine modification is found at Ser215.

It belongs to the CodY family.

It localises to the cytoplasm. DNA-binding global transcriptional regulator which is involved in the adaptive response to starvation and acts by directly or indirectly controlling the expression of numerous genes in response to nutrient availability. During rapid exponential growth, CodY is highly active and represses genes whose products allow adaptation to nutrient depletion. The polypeptide is Global transcriptional regulator CodY (Bacillus anthracis (strain A0248)).